The chain runs to 405 residues: Glucose-1-phosphate adenylyltransferase (405 aa).

Residues Tyr-96, Gly-161, 176 to 177 (EK), and Ser-194 each bind alpha-D-glucose 1-phosphate.

The protein belongs to the bacterial/plant glucose-1-phosphate adenylyltransferase family. In terms of assembly, homotetramer.

The catalysed reaction is alpha-D-glucose 1-phosphate + ATP + H(+) = ADP-alpha-D-glucose + diphosphate. The protein operates within glycan biosynthesis; glycogen biosynthesis. In terms of biological role, involved in the biosynthesis of ADP-glucose, a building block required for the elongation reactions to produce glycogen. Catalyzes the reaction between ATP and alpha-D-glucose 1-phosphate (G1P) to produce pyrophosphate and ADP-Glc. This Aliivibrio fischeri (strain MJ11) (Vibrio fischeri) protein is Glucose-1-phosphate adenylyltransferase.